A 315-amino-acid polypeptide reads, in one-letter code: Lipoyl synthase (315 aa).

[4Fe-4S] cluster contacts are provided by Cys62, Cys67, Cys73, Cys88, Cys92, Cys95, and Ser302. In terms of domain architecture, Radical SAM core spans 73-291 (CFGHGTATFM…GELAKKLGFS (219 aa)).

Belongs to the radical SAM superfamily. Lipoyl synthase family. The cofactor is [4Fe-4S] cluster.

It localises to the cytoplasm. The catalysed reaction is [[Fe-S] cluster scaffold protein carrying a second [4Fe-4S](2+) cluster] + N(6)-octanoyl-L-lysyl-[protein] + 2 oxidized [2Fe-2S]-[ferredoxin] + 2 S-adenosyl-L-methionine + 4 H(+) = [[Fe-S] cluster scaffold protein] + N(6)-[(R)-dihydrolipoyl]-L-lysyl-[protein] + 4 Fe(3+) + 2 hydrogen sulfide + 2 5'-deoxyadenosine + 2 L-methionine + 2 reduced [2Fe-2S]-[ferredoxin]. It participates in protein modification; protein lipoylation via endogenous pathway; protein N(6)-(lipoyl)lysine from octanoyl-[acyl-carrier-protein]: step 2/2. Functionally, catalyzes the radical-mediated insertion of two sulfur atoms into the C-6 and C-8 positions of the octanoyl moiety bound to the lipoyl domains of lipoate-dependent enzymes, thereby converting the octanoylated domains into lipoylated derivatives. The sequence is that of Lipoyl synthase from Coxiella burnetii (strain Dugway 5J108-111).